Reading from the N-terminus, the 215-residue chain is MLQVYLVRHGETQWNAERRIQGQSDSPLTAKGEQQAMQVGERARSLGITHIISSDLGRTKRTAEIIAQACGCDITFDSRLRELDMGVLEKRQIDSLTEEEEGWRRQLVNGTQDGRIPGGESMQELSDRVHAALASCLELPQGSRPLLVSHGIALGCLVSTILGLPAWAERRLRLRNCSISRIDYQESQWLASGWVVETAGDVSHLDAPALDELQR.

Residues 8 to 15 (RHGETQWN), 21 to 22 (QG), Arg58, Lys60, 82 to 85 (ELDM), 104 to 105 (RR), and 151 to 152 (GI) each bind substrate. The active-site Tele-phosphohistidine intermediate is His9. Glu82 functions as the Proton donor/acceptor in the catalytic mechanism.

The protein belongs to the phosphoglycerate mutase family. GpmB subfamily.

It catalyses the reaction (2R)-2-phosphoglycerate = (2R)-3-phosphoglycerate. It functions in the pathway carbohydrate degradation; glycolysis; pyruvate from D-glyceraldehyde 3-phosphate: step 3/5. This Salmonella agona (strain SL483) protein is Probable phosphoglycerate mutase GpmB.